We begin with the raw amino-acid sequence, 422 residues long: GTPase Obg (422 aa).

The region spanning 1–158 (MFYDRARIFV…RWLDLELKLL (158 aa)) is the Obg domain. The region spanning 159-329 (ADVGLVGFPN…LVYRVSALLE (171 aa)) is the OBG-type G domain. Residues 165 to 172 (GFPNAGKS), 190 to 194 (FTTIT), 212 to 215 (DIPG), 282 to 285 (NKMD), and 310 to 312 (SAV) contribute to the GTP site. 2 residues coordinate Mg(2+): serine 172 and threonine 192. The region spanning 337–422 (VPEALERPVI…IGDYEFEYVE (86 aa)) is the OCT domain.

Belongs to the TRAFAC class OBG-HflX-like GTPase superfamily. OBG GTPase family. In terms of assembly, monomer. Requires Mg(2+) as cofactor.

The protein localises to the cytoplasm. Its function is as follows. An essential GTPase which binds GTP, GDP and possibly (p)ppGpp with moderate affinity, with high nucleotide exchange rates and a fairly low GTP hydrolysis rate. Plays a role in control of the cell cycle, stress response, ribosome biogenesis and in those bacteria that undergo differentiation, in morphogenesis control. This Pelotomaculum thermopropionicum (strain DSM 13744 / JCM 10971 / SI) protein is GTPase Obg.